A 131-amino-acid chain; its full sequence is MSWQTYVDDHLMCEIEGNHLSAAAIIGQDGSVWAQSATFPQLKPEEVTGIVRDFDEPGTLAPTGLYLGGTKYMVIQGEPGAVIRGKKGPGGVTVKKTTLALLIGIYDEPMTPGQCNMIVERLGDYLVEQGL.

It belongs to the profilin family. In terms of assembly, occurs in many kinds of cells as a complex with monomeric actin in a 1:1 ratio.

The protein resides in the cytoplasm. It localises to the cytoskeleton. Functionally, binds to actin and affects the structure of the cytoskeleton. At high concentrations, profilin prevents the polymerization of actin, whereas it enhances it at low concentrations. By binding to PIP2, it inhibits the formation of IP3 and DG. The protein is Profilin of Fragaria ananassa (Strawberry).